A 447-amino-acid chain; its full sequence is Tubulin beta-4 chain (447 aa).

GTP is bound by residues Gln11, Glu69, Ser138, Gly142, Thr143, Gly144, Asn204, and Asn226. Residue Glu69 coordinates Mg(2+). A disordered region spans residues 423-447 (QQYQDATADEEGEYEDEEQQEADDM). Residues 429–447 (TADEEGEYEDEEQQEADDM) show a composition bias toward acidic residues.

Belongs to the tubulin family. As to quaternary structure, dimer of alpha and beta chains. A typical microtubule is a hollow water-filled tube with an outer diameter of 25 nm and an inner diameter of 15 nM. Alpha-beta heterodimers associate head-to-tail to form protofilaments running lengthwise along the microtubule wall with the beta-tubulin subunit facing the microtubule plus end conferring a structural polarity. Microtubules usually have 13 protofilaments but different protofilament numbers can be found in some organisms and specialized cells. The cofactor is Mg(2+). As to expression, expressed in roots and leaf sheaths.

It is found in the cytoplasm. Its subcellular location is the cytoskeleton. Functionally, tubulin is the major constituent of microtubules, a cylinder consisting of laterally associated linear protofilaments composed of alpha- and beta-tubulin heterodimers. Microtubules grow by the addition of GTP-tubulin dimers to the microtubule end, where a stabilizing cap forms. Below the cap, tubulin dimers are in GDP-bound state, owing to GTPase activity of alpha-tubulin. The sequence is that of Tubulin beta-4 chain (TUBB4) from Oryza sativa subsp. japonica (Rice).